Consider the following 410-residue polypeptide: MKRGGLWLLLGLLVLSACSSNPPAASTQEAPLLGLEAPEAIPGRYIVVYKENADVLPALEALKAALEPGLMQPQGLQAQALRTLGLEGARVDKVYTAALRGVAVEVPDQELARLRQDPRVAYIEADQEVRAFAVQSPATWGLDRIDQRTLPLDGRYTYTATGAGVHAYVVDTGILLSHQEFTGRIGKGYDAITPGGSAQDCNGHGTHVAGTIGGTTYGVAKGVTLHPVRVLDCNGSGSNSSVIAGLDWVTQNHVKPAVINMSLGGGASTALDTAVMNAINAGVTVVVAAGNDNRDACFYSPARVTAAITVGATTSTDYRASFSNYGRCLDLFAPGQSITSAWYTSSTATNTISGTSMATPHVTGAAALYLQWYPTATPSQVASALLYYATPNVVKNAGRYSPNLLLYTPF.

A signal peptide spans M1–S19. A propeptide spanning residues S20–F132 is cleaved from the precursor. The region spanning Y45–R130 is the Inhibitor I9 domain. One can recognise a Peptidase S8 domain in the interval T139–F410. Active-site charge relay system residues include D171, H204, and S356.

It belongs to the peptidase S8 family. Contains 4 Cys residues that form two disulfide bonds. Post-translationally, glycosylated. This proteinase has a 0.7% carbohydrate content.

It is found in the secreted. Its function is as follows. Serine proteinase with preferred activity for amino acids with aromatic side groups at the P1' side of the scissible bond. This chain is Extracellular serine proteinase, found in Thermus sp. (strain Rt41A).